Reading from the N-terminus, the 273-residue chain is Shikimate dehydrogenase (NADP(+)) (273 aa).

Shikimate contacts are provided by residues 14-16 (SKS) and Thr61. Catalysis depends on Lys65, which acts as the Proton acceptor. An NADP(+)-binding site is contributed by Glu77. Residues Asn86 and Asp102 each coordinate shikimate. Residues 126 to 130 (GAGGA), 150 to 155 (NRTYEK), and Met213 each bind NADP(+). Tyr215 lines the shikimate pocket. Gly237 lines the NADP(+) pocket.

Belongs to the shikimate dehydrogenase family. Homodimer.

It catalyses the reaction shikimate + NADP(+) = 3-dehydroshikimate + NADPH + H(+). The protein operates within metabolic intermediate biosynthesis; chorismate biosynthesis; chorismate from D-erythrose 4-phosphate and phosphoenolpyruvate: step 4/7. Involved in the biosynthesis of the chorismate, which leads to the biosynthesis of aromatic amino acids. Catalyzes the reversible NADPH linked reduction of 3-dehydroshikimate (DHSA) to yield shikimate (SA). This chain is Shikimate dehydrogenase (NADP(+)), found in Aliivibrio fischeri (strain MJ11) (Vibrio fischeri).